Reading from the N-terminus, the 137-residue chain is Putative pre-16S rRNA nuclease (137 aa).

This sequence belongs to the YqgF nuclease family.

It is found in the cytoplasm. In terms of biological role, could be a nuclease involved in processing of the 5'-end of pre-16S rRNA. The protein is Putative pre-16S rRNA nuclease of Chromobacterium violaceum (strain ATCC 12472 / DSM 30191 / JCM 1249 / CCUG 213 / NBRC 12614 / NCIMB 9131 / NCTC 9757 / MK).